The following is a 498-amino-acid chain: ATP synthase subunit beta, chloroplastic (498 aa).

172–179 (GGAGVGKT) is a binding site for ATP.

It belongs to the ATPase alpha/beta chains family. In terms of assembly, F-type ATPases have 2 components, CF(1) - the catalytic core - and CF(0) - the membrane proton channel. CF(1) has five subunits: alpha(3), beta(3), gamma(1), delta(1), epsilon(1). CF(0) has four main subunits: a(1), b(1), b'(1) and c(9-12).

It localises to the plastid. The protein resides in the chloroplast thylakoid membrane. The catalysed reaction is ATP + H2O + 4 H(+)(in) = ADP + phosphate + 5 H(+)(out). Its function is as follows. Produces ATP from ADP in the presence of a proton gradient across the membrane. The catalytic sites are hosted primarily by the beta subunits. The protein is ATP synthase subunit beta, chloroplastic of Brasenia schreberi (Water shield).